Reading from the N-terminus, the 454-residue chain is MELKGKKVLVAGLGVSGIALCKVLDSLKAKVIAYDEKEYDVLKENLEEIKSLSIDFRFGKFKKEFLEGVDLIVLSPGVPIDSDIVKTAQEKKIELLGEVEFAYRFSKAPIYAITGTNGKTTTTSLLGEMFKNTGRKVYVAGNIGYPLIYAVMEAAEDDFIVAEISSFQLETIKEFKPKISCIINITPDHLDRHKTFENYRDIKGRIFENQREDEYTVLNYDDPVTWSLKNKAKCRVFPFSRKSLLENGAYIKDGSIYISVNGNAEKIIDIEEIYIPGEHNLENALAASSVAYLSGISADVIANTLKTFKGVEHRIEFVDEINGVKFYNDSKGTNPDASIKAIQALKTPIVLIAGGYDKGSEFDEFVKAFNGKVKKLILIGQTAKKIRDTARKYSYPEDDILFAGTLEEAVKKAYESAKEGDSVLLSPACASWDMFRNFEERGRIFKKAVAELRR.

115–121 contacts ATP; that stretch reads GTNGKTT.

Belongs to the MurCDEF family.

The protein localises to the cytoplasm. It carries out the reaction UDP-N-acetyl-alpha-D-muramoyl-L-alanine + D-glutamate + ATP = UDP-N-acetyl-alpha-D-muramoyl-L-alanyl-D-glutamate + ADP + phosphate + H(+). It participates in cell wall biogenesis; peptidoglycan biosynthesis. Its function is as follows. Cell wall formation. Catalyzes the addition of glutamate to the nucleotide precursor UDP-N-acetylmuramoyl-L-alanine (UMA). The sequence is that of UDP-N-acetylmuramoylalanine--D-glutamate ligase from Thermoanaerobacter sp. (strain X514).